A 356-amino-acid polypeptide reads, in one-letter code: S-adenosylmethionine:tRNA ribosyltransferase-isomerase (356 aa).

Belongs to the QueA family. In terms of assembly, monomer.

It localises to the cytoplasm. It catalyses the reaction 7-aminomethyl-7-carbaguanosine(34) in tRNA + S-adenosyl-L-methionine = epoxyqueuosine(34) in tRNA + adenine + L-methionine + 2 H(+). Its pathway is tRNA modification; tRNA-queuosine biosynthesis. Its function is as follows. Transfers and isomerizes the ribose moiety from AdoMet to the 7-aminomethyl group of 7-deazaguanine (preQ1-tRNA) to give epoxyqueuosine (oQ-tRNA). The sequence is that of S-adenosylmethionine:tRNA ribosyltransferase-isomerase from Shigella dysenteriae serotype 1 (strain Sd197).